Here is a 310-residue protein sequence, read N- to C-terminus: Retrotransposon Gag-like protein 4 (310 aa).

Residues 278 to 295 (QLCLYCSQSGHFTRDCLA) form a CCHC-type zinc finger.

Involved in cognitive function in the brain, possibly via the noradrenergic system. The protein is Retrotransposon Gag-like protein 4 of Homo sapiens (Human).